A 322-amino-acid polypeptide reads, in one-letter code: Homoserine kinase (322 aa).

107-117 (PLSSGMGGSAA) is a binding site for ATP.

The protein belongs to the GHMP kinase family. Homoserine kinase subfamily.

The protein localises to the cytoplasm. It catalyses the reaction L-homoserine + ATP = O-phospho-L-homoserine + ADP + H(+). It functions in the pathway amino-acid biosynthesis; L-threonine biosynthesis; L-threonine from L-aspartate: step 4/5. Its function is as follows. Catalyzes the ATP-dependent phosphorylation of L-homoserine to L-homoserine phosphate. The protein is Homoserine kinase of Xylella fastidiosa (strain 9a5c).